Reading from the N-terminus, the 294-residue chain is N-acetylmuramic acid 6-phosphate etherase (294 aa).

One can recognise an SIS domain in the interval Thr-56–Lys-219. Glu-84 acts as the Proton donor in catalysis. Glu-115 is an active-site residue.

This sequence belongs to the GCKR-like family. MurNAc-6-P etherase subfamily. In terms of assembly, homodimer.

It catalyses the reaction N-acetyl-D-muramate 6-phosphate + H2O = N-acetyl-D-glucosamine 6-phosphate + (R)-lactate. Its pathway is amino-sugar metabolism; 1,6-anhydro-N-acetylmuramate degradation. It functions in the pathway amino-sugar metabolism; N-acetylmuramate degradation. It participates in cell wall biogenesis; peptidoglycan recycling. Functionally, specifically catalyzes the cleavage of the D-lactyl ether substituent of MurNAc 6-phosphate, producing GlcNAc 6-phosphate and D-lactate. Together with AnmK, is also required for the utilization of anhydro-N-acetylmuramic acid (anhMurNAc) either imported from the medium or derived from its own cell wall murein, and thus plays a role in cell wall recycling. In Francisella philomiragia subsp. philomiragia (strain ATCC 25017 / CCUG 19701 / FSC 153 / O#319-036), this protein is N-acetylmuramic acid 6-phosphate etherase.